Here is a 285-residue protein sequence, read N- to C-terminus: 4-hydroxybenzoate octaprenyltransferase (285 aa).

The next 7 membrane-spanning stretches (helical) occupy residues 17–37, 41–61, 92–112, 135–155, 158–178, 216–236, and 263–283; these read PVGI…AGAG, PKVL…GCVI, LLLF…LNPL, HWPQ…AFAA, GTVP…ATVY, ALLL…YYYL, and AFLN…LHYL.

It belongs to the UbiA prenyltransferase family. Mg(2+) serves as cofactor.

It localises to the cell inner membrane. It catalyses the reaction all-trans-octaprenyl diphosphate + 4-hydroxybenzoate = 4-hydroxy-3-(all-trans-octaprenyl)benzoate + diphosphate. It participates in cofactor biosynthesis; ubiquinone biosynthesis. Its function is as follows. Catalyzes the prenylation of para-hydroxybenzoate (PHB) with an all-trans polyprenyl group. Mediates the second step in the final reaction sequence of ubiquinone-8 (UQ-8) biosynthesis, which is the condensation of the polyisoprenoid side chain with PHB, generating the first membrane-bound Q intermediate 3-octaprenyl-4-hydroxybenzoate. This is 4-hydroxybenzoate octaprenyltransferase from Nitrosococcus oceani (strain ATCC 19707 / BCRC 17464 / JCM 30415 / NCIMB 11848 / C-107).